The sequence spans 1343 residues: DNA-directed RNA polymerase subunit beta (1343 aa).

Belongs to the RNA polymerase beta chain family. The RNAP catalytic core consists of 2 alpha, 1 beta, 1 beta' and 1 omega subunit. When a sigma factor is associated with the core the holoenzyme is formed, which can initiate transcription.

It carries out the reaction RNA(n) + a ribonucleoside 5'-triphosphate = RNA(n+1) + diphosphate. In terms of biological role, DNA-dependent RNA polymerase catalyzes the transcription of DNA into RNA using the four ribonucleoside triphosphates as substrates. In Shewanella frigidimarina (strain NCIMB 400), this protein is DNA-directed RNA polymerase subunit beta.